The sequence spans 213 residues: Outer-membrane lipoprotein carrier protein (213 aa).

The N-terminal stretch at 1 to 23 (MKKLLKQSLLGFALVSMTGAAFA) is a signal peptide.

It belongs to the LolA family. As to quaternary structure, monomer.

It is found in the periplasm. Functionally, participates in the translocation of lipoproteins from the inner membrane to the outer membrane. Only forms a complex with a lipoprotein if the residue after the N-terminal Cys is not an aspartate (The Asp acts as a targeting signal to indicate that the lipoprotein should stay in the inner membrane). The polypeptide is Outer-membrane lipoprotein carrier protein (Actinobacillus pleuropneumoniae serotype 3 (strain JL03)).